The following is a 149-amino-acid chain: MLRTVIVAGALVLTASAVMAQQDLVDKTQKLMKDNGRNMMVLGAIAKGEKPYDQAAVDAALKQFDETAKDLPKLFPDSVKGLKPFDSKYSSSPKIWAERAKFDTEIADFAKAVDGAKGKIKDVDTLKAAMQPIGKACGNCHENFRDKEG.

The N-terminal stretch at 1 to 20 (MLRTVIVAGALVLTASAVMA) is a signal peptide. Heme c contacts are provided by Met-32, Cys-137, Cys-140, and His-141.

Monomer. In terms of processing, binds 1 heme c group covalently per subunit.

Functionally, low-spin monoheme cytochrome c. In Rhodopseudomonas palustris (strain ATCC BAA-98 / CGA009), this protein is Cytochrome c-556.